An 805-amino-acid polypeptide reads, in one-letter code: MIQPLVKASRPRLWVCSDCLLRRTLSPLLRQQRRRFTGFTAHAPKTLTGTIPVTHKNGDTKHDDSLLRSIFDSPETWKQFSGDKHGRNVGLFRNAYLTSPHGFLDFAHVSLGKARALVDKVLNAQSLDEYRAIVRHLDRLSDILCRVLDMADFVRVTHPDQQIQRTASMAWDMMYEYMNQLNTMTGLYDQLVQAMDNPQVSTTWSEEERMVAEVLKLDFAKSAVHLPKDARDKFVHLSSAISQTGTNFIQHMEPKIPYTTVEKSRMMGMDPVEVKRMASMGKVYVQTLSPQASIALRTVRDDHARHQLFMASRTASRRTVHTLEELMLLRGESAKLSGFESYGHLVLHDRMMASTPESVRQFLQALSENTRPQAQQEVADLTAAKRAHKGGDATLEPWDKDFYAESIRQAIKSRQKREDLSSYFSLGTVMQGLSRIFTRLYGIRFVPREPMPGETWHPDVRRLDVVSDVEGHVAVLYCDLFYRPLKSPNPAHFTLRCSRELSPHEIAETAHTQAENPHVLIPSFESAEFAANDGMAYSRSQDGAIKQLPTIALVCDFPQQSHNRPALLSFFQLETLFHEMGHAIHSILARTSFQNVSGTRCATDLAELPSTLMEYFAADPSVLALFARHYETDNPLPYEWVDNKIREARRFEALDTENQIILAMLDQELHSSKAVQGHIDSTEIFHSLQRQFSTAPPDPQGTAWQGFFGHLVGYGSTYYSYLFDRVLAQRVWNVVFNSGQGGAALQRENGERLKENLLKWGGSKDPWKCLAGALKDERLEGGGEKAMKLVGSWGGQRGTKSDQAV.

Residues 1–25 (MIQPLVKASRPRLWVCSDCLLRRTL) constitute a mitochondrion transit peptide. His578 is a Zn(2+) binding site. Glu579 is a catalytic residue. Residues His582 and His585 each contribute to the Zn(2+) site.

The protein belongs to the peptidase M3 family. The cofactor is Zn(2+).

It localises to the mitochondrion matrix. It carries out the reaction Release of an N-terminal octapeptide as second stage of processing of some proteins imported into the mitochondrion.. Cleaves proteins, imported into the mitochondrion, to their mature size. While most mitochondrial precursor proteins are processed to the mature form in one step by mitochondrial processing peptidase (MPP), the sequential cleavage by MIP of an octapeptide after initial processing by MPP is a required step for a subgroup of nuclear-encoded precursor proteins destined for the matrix or the inner membrane. In Neurospora crassa (strain ATCC 24698 / 74-OR23-1A / CBS 708.71 / DSM 1257 / FGSC 987), this protein is Mitochondrial intermediate peptidase (oct-1).